The chain runs to 419 residues: L-rhamnose isomerase (419 aa).

3 residues coordinate Mn(2+): histidine 262, aspartate 294, and aspartate 296.

It belongs to the rhamnose isomerase family. Homotetramer. Mn(2+) serves as cofactor.

The protein localises to the cytoplasm. It catalyses the reaction L-rhamnopyranose = L-rhamnulose. Its pathway is carbohydrate degradation; L-rhamnose degradation; glycerone phosphate from L-rhamnose: step 1/3. Catalyzes the interconversion of L-rhamnose and L-rhamnulose. In Salmonella newport (strain SL254), this protein is L-rhamnose isomerase.